An 81-amino-acid chain; its full sequence is Acyl carrier protein (81 aa).

The 76-residue stretch at 3 to 78 (QEIFEKVKSI…AAVDYIEKEQ (76 aa)) folds into the Carrier domain. S38 carries the O-(pantetheine 4'-phosphoryl)serine modification.

Belongs to the acyl carrier protein (ACP) family. In terms of processing, 4'-phosphopantetheine is transferred from CoA to a specific serine of apo-ACP by AcpS. This modification is essential for activity because fatty acids are bound in thioester linkage to the sulfhydryl of the prosthetic group.

The protein localises to the cytoplasm. It functions in the pathway lipid metabolism; fatty acid biosynthesis. Its function is as follows. Carrier of the growing fatty acid chain in fatty acid biosynthesis. In Crocosphaera subtropica (strain ATCC 51142 / BH68) (Cyanothece sp. (strain ATCC 51142)), this protein is Acyl carrier protein.